The following is a 317-amino-acid chain: Melanocyte-stimulating hormone receptor (317 aa).

The Extracellular portion of the chain corresponds to 1–37 (MPVQGSQRRLLGSLNSTPTATPHLGLAANQTGARCLE). The N-linked (GlcNAc...) asparagine glycan is linked to asparagine 29. A helical membrane pass occupies residues 38-63 (VSVPDGLFLSLGLVSLVENVLVVTAI). The Cytoplasmic portion of the chain corresponds to 64–72 (AKNRNLHSP). The helical transmembrane segment at 73 to 93 (MYCFICCLALSDLLVSGSNML) threads the bilayer. Residues 94–118 (ETAVTLLLEAGALAARAAVVQQLDN) are Extracellular-facing. A helical transmembrane segment spans residues 119 to 140 (VIDVITCSSMLSSLCFLGAIAV). At 141–163 (DRYISIFYALRYHSIVTLPRARR) the chain is on the cytoplasmic side. A helical membrane pass occupies residues 164–183 (AVAAIWVASVLCSTLFIAYY). Residues 184–191 (DHAAVLLC) are Extracellular-facing. A helical membrane pass occupies residues 192–211 (LVVFFLAMLVLMAVLYVHML). Over 212–240 (ARACQHAQGIARLHKRQRLAHQGFGLKGA) the chain is Cytoplasmic. Residues 241–266 (ATLTILLGIFFLCWGPFFLHLTLIVL) traverse the membrane as a helical segment. At 267 to 279 (CPQHPTCSCIFKN) the chain is on the extracellular side. A helical membrane pass occupies residues 280–300 (FNLFLALIICNAIIDPLIYAF). At 301–317 (RSQELRRTLKEVLLCSW) the chain is on the cytoplasmic side. Cysteine 315 carries the S-palmitoyl cysteine lipid modification.

Belongs to the G-protein coupled receptor 1 family. In terms of assembly, interacts with MGRN1, but does not undergo MGRN1-mediated ubiquitination; this interaction competes with GNAS-binding and thus inhibits agonist-induced cAMP production. Interacts with OPN3; the interaction results in a decrease in MC1R-mediated cAMP signaling and ultimately a decrease in melanin production in melanocytes.

It is found in the cell membrane. Functionally, receptor for MSH (alpha, beta and gamma) and ACTH. The activity of this receptor is mediated by G proteins which activate adenylate cyclase. Mediates melanogenesis, the production of eumelanin (black/brown) and phaeomelanin (red/yellow), via regulation of cAMP signaling in melanocytes. This Macaca sylvanus (Barbary macaque) protein is Melanocyte-stimulating hormone receptor (MC1R).